Reading from the N-terminus, the 298-residue chain is Acetylglutamate kinase (298 aa).

Residues 67-68 (GG), arginine 89, and asparagine 193 each bind substrate.

It belongs to the acetylglutamate kinase family. ArgB subfamily.

It is found in the cytoplasm. The enzyme catalyses N-acetyl-L-glutamate + ATP = N-acetyl-L-glutamyl 5-phosphate + ADP. Its pathway is amino-acid biosynthesis; L-arginine biosynthesis; N(2)-acetyl-L-ornithine from L-glutamate: step 2/4. Functionally, catalyzes the ATP-dependent phosphorylation of N-acetyl-L-glutamate. This Desulfitobacterium hafniense (strain DSM 10664 / DCB-2) protein is Acetylglutamate kinase.